A 297-amino-acid chain; its full sequence is 2-phospho-L-lactate transferase (297 aa).

D49 contributes to the 7,8-didemethyl-8-hydroxy-5-deazariboflavin binding site.

This sequence belongs to the CofD family. In terms of assembly, homodimer. Mg(2+) serves as cofactor.

It carries out the reaction (2S)-lactyl-2-diphospho-5'-guanosine + 7,8-didemethyl-8-hydroxy-5-deazariboflavin = oxidized coenzyme F420-0 + GMP + H(+). It functions in the pathway cofactor biosynthesis; coenzyme F420 biosynthesis. Catalyzes the transfer of the 2-phospholactate moiety from (2S)-lactyl-2-diphospho-5'-guanosine to 7,8-didemethyl-8-hydroxy-5-deazariboflavin (FO) with the formation of oxidized coenzyme F420-0 and GMP. The polypeptide is 2-phospho-L-lactate transferase (Methanospirillum hungatei JF-1 (strain ATCC 27890 / DSM 864 / NBRC 100397 / JF-1)).